A 503-amino-acid polypeptide reads, in one-letter code: 2-isopropylmalate synthase (503 aa).

4 residues coordinate Mn(2+): aspartate 1, histidine 189, histidine 191, and asparagine 225. A Pyruvate carboxyltransferase domain is found at aspartate 1–tyrosine 254. The interval serine 379 to glutamine 503 is regulatory domain.

This sequence belongs to the alpha-IPM synthase/homocitrate synthase family. LeuA type 1 subfamily. As to quaternary structure, homodimer. Mn(2+) is required as a cofactor.

It localises to the cytoplasm. The catalysed reaction is 3-methyl-2-oxobutanoate + acetyl-CoA + H2O = (2S)-2-isopropylmalate + CoA + H(+). It functions in the pathway amino-acid biosynthesis; L-leucine biosynthesis; L-leucine from 3-methyl-2-oxobutanoate: step 1/4. Functionally, catalyzes the condensation of the acetyl group of acetyl-CoA with 3-methyl-2-oxobutanoate (2-ketoisovalerate) to form 3-carboxy-3-hydroxy-4-methylpentanoate (2-isopropylmalate). This chain is 2-isopropylmalate synthase, found in Buchnera aphidicola subsp. Uroleucon ambrosiae.